The primary structure comprises 444 residues: Tubulin beta-7 chain (444 aa).

GTP-binding residues include glutamine 11, glutamate 69, serine 138, glycine 142, threonine 143, glycine 144, asparagine 204, and asparagine 226. Glutamate 69 lines the Mg(2+) pocket.

The protein belongs to the tubulin family. Dimer of alpha and beta chains. A typical microtubule is a hollow water-filled tube with an outer diameter of 25 nm and an inner diameter of 15 nM. Alpha-beta heterodimers associate head-to-tail to form protofilaments running lengthwise along the microtubule wall with the beta-tubulin subunit facing the microtubule plus end conferring a structural polarity. Microtubules usually have 13 protofilaments but different protofilament numbers can be found in some organisms and specialized cells. It depends on Mg(2+) as a cofactor. Expressed in roots, leaf sheaths, and suspension cultured cells.

It is found in the cytoplasm. The protein localises to the cytoskeleton. Functionally, tubulin is the major constituent of microtubules, a cylinder consisting of laterally associated linear protofilaments composed of alpha- and beta-tubulin heterodimers. Microtubules grow by the addition of GTP-tubulin dimers to the microtubule end, where a stabilizing cap forms. Below the cap, tubulin dimers are in GDP-bound state, owing to GTPase activity of alpha-tubulin. This is Tubulin beta-7 chain (TUBB7) from Oryza sativa subsp. japonica (Rice).